Consider the following 432-residue polypeptide: uncharacterized protein (432 aa).

It to M.jannaschii MJ0977.

This is an uncharacterized protein from Methanocaldococcus jannaschii (strain ATCC 43067 / DSM 2661 / JAL-1 / JCM 10045 / NBRC 100440) (Methanococcus jannaschii).